The following is a 72-amino-acid chain: Translation initiation factor IF-1 (72 aa).

Residues 1–72 (MAKEDCIEMQ…SKARIIFRAR (72 aa)) form the S1-like domain.

It belongs to the IF-1 family. In terms of assembly, component of the 30S ribosomal translation pre-initiation complex which assembles on the 30S ribosome in the order IF-2 and IF-3, IF-1 and N-formylmethionyl-tRNA(fMet); mRNA recruitment can occur at any time during PIC assembly.

Its subcellular location is the cytoplasm. Functionally, one of the essential components for the initiation of protein synthesis. Stabilizes the binding of IF-2 and IF-3 on the 30S subunit to which N-formylmethionyl-tRNA(fMet) subsequently binds. Helps modulate mRNA selection, yielding the 30S pre-initiation complex (PIC). Upon addition of the 50S ribosomal subunit IF-1, IF-2 and IF-3 are released leaving the mature 70S translation initiation complex. This Haemophilus ducreyi (strain 35000HP / ATCC 700724) protein is Translation initiation factor IF-1.